The sequence spans 411 residues: LL-diaminopimelate aminotransferase (411 aa).

Substrate-binding residues include tyrosine 15 and glycine 42. Pyridoxal 5'-phosphate-binding positions include tyrosine 72, alanine 108 to lysine 109, tyrosine 132, asparagine 187, tyrosine 218, and serine 246 to serine 248. The substrate site is built by lysine 109, tyrosine 132, and asparagine 187. Lysine 249 carries the post-translational modification N6-(pyridoxal phosphate)lysine. The pyridoxal 5'-phosphate site is built by arginine 257 and asparagine 292. Residues asparagine 292 and arginine 388 each coordinate substrate.

It belongs to the class-I pyridoxal-phosphate-dependent aminotransferase family. LL-diaminopimelate aminotransferase subfamily. In terms of assembly, homodimer. Requires pyridoxal 5'-phosphate as cofactor.

The enzyme catalyses (2S,6S)-2,6-diaminopimelate + 2-oxoglutarate = (S)-2,3,4,5-tetrahydrodipicolinate + L-glutamate + H2O + H(+). It participates in amino-acid biosynthesis; L-lysine biosynthesis via DAP pathway; LL-2,6-diaminopimelate from (S)-tetrahydrodipicolinate (aminotransferase route): step 1/1. Involved in the synthesis of meso-diaminopimelate (m-DAP or DL-DAP), required for both lysine and peptidoglycan biosynthesis. Catalyzes the direct conversion of tetrahydrodipicolinate to LL-diaminopimelate. This is LL-diaminopimelate aminotransferase from Crocosphaera subtropica (strain ATCC 51142 / BH68) (Cyanothece sp. (strain ATCC 51142)).